A 119-amino-acid polypeptide reads, in one-letter code: Large ribosomal subunit protein uL22 (119 aa).

It belongs to the universal ribosomal protein uL22 family. In terms of assembly, part of the 50S ribosomal subunit.

Its function is as follows. This protein binds specifically to 23S rRNA; its binding is stimulated by other ribosomal proteins, e.g. L4, L17, and L20. It is important during the early stages of 50S assembly. It makes multiple contacts with different domains of the 23S rRNA in the assembled 50S subunit and ribosome. In terms of biological role, the globular domain of the protein is located near the polypeptide exit tunnel on the outside of the subunit, while an extended beta-hairpin is found that lines the wall of the exit tunnel in the center of the 70S ribosome. The chain is Large ribosomal subunit protein uL22 from Rickettsia prowazekii (strain Madrid E).